Here is a 316-residue protein sequence, read N- to C-terminus: Prenytransferase adrG (316 aa).

Helical transmembrane passes span 36-56 (LLGF…CASI), 60-80 (KIPI…SIFL), 131-151 (VLIY…FFAL), 163-183 (PQIT…SLGL), 191-211 (PTVC…VIYS), 247-267 (GFLA…VVSV), and 294-314 (KSAF…EYCL).

Belongs to the UbiA prenyltransferase family. It depends on Mg(2+) as a cofactor.

The protein localises to the membrane. The catalysed reaction is 3,5-dimethylorsellinate + (2E,6E)-farnesyl diphosphate = (3R)-3-farnesyl-6-hydroxy-2,3,5-trimethyl-4-oxocyclohexa-1,5-diene-1-carboxylate + diphosphate + H(+). The protein operates within secondary metabolite biosynthesis; terpenoid biosynthesis. Prenytransferase; part of the gene cluster that mediates the biosynthesis of andrastins, meroterpenoid compounds that exhibit inhibitory activity against ras farnesyltransferase, suggesting that they could be promising leads for antitumor agents. The first step of the pathway is the synthesis of 3,5-dimethylorsellinic acid (DMOA) by the polyketide synthase adrD via condensation of one acetyl-CoA starter unit with 3 malonyl-CoA units and 2 methylations. DMAO is then converted to farnesyl-DMAO by the prenyltransferase adrG. The methyltransferase adrK catalyzes the methylation of the carboxyl group of farnesyl-DMAO to farnesyl-DMAO methyl ester which is further converted to epoxyfarnesyl-DMAO methyl ester by the FAD-dependent monooxygenase adrH. The terpene cyclase adrI then catalyzes the carbon skeletal rearrangement to generate the andrastin E, the first compound in the pathway having the andrastin scaffold, with the tetracyclic ring system. The post-cyclization tailoring enzymes adrF, adrE, adrJ, and adrA, are involved in the conversion of andrastin E into andrastin A. The short chain dehydrogenase adrF is responsible for the oxidation of the C-3 a hydroxyl group of andrastin E to yield the corresponding ketone, andrastin D. The ketoreductase adrE stereoselectively reduces the carbonyl moiety to reverse the stereochemistry of the C-3 position to yield andrastin F. The acetyltransferase adrJ is the acetyltransferase that attaches the acetyl group to the C-3 hydroxyl group of andrastin F to yield andrastin C. Finally, the cytochrome P450 monooxygenase adrA catalyzes two sequential oxidation reactions of the C-23 methyl group, to generate the corresponding alcohol andrastin B, and aldehyde andrastin A. The sequence is that of Prenytransferase adrG from Penicillium roqueforti.